The primary structure comprises 267 residues: B3 domain-containing protein Os02g0455800 (267 aa).

The segment at residues glutamate 30–threonine 131 is a DNA-binding region (TF-B3). Residues glutamine 172–threonine 221 form a disordered region. A compositionally biased stretch (basic residues) spans serine 205 to lysine 214.

It is found in the nucleus. The sequence is that of B3 domain-containing protein Os02g0455800 from Oryza sativa subsp. japonica (Rice).